Consider the following 126-residue polypeptide: Holo-[acyl-carrier-protein] synthase (126 aa).

The Mg(2+) site is built by D9 and E58.

The protein belongs to the P-Pant transferase superfamily. AcpS family. Mg(2+) is required as a cofactor.

The protein localises to the cytoplasm. The enzyme catalyses apo-[ACP] + CoA = holo-[ACP] + adenosine 3',5'-bisphosphate + H(+). Its function is as follows. Transfers the 4'-phosphopantetheine moiety from coenzyme A to a Ser of acyl-carrier-protein. In Hamiltonella defensa subsp. Acyrthosiphon pisum (strain 5AT), this protein is Holo-[acyl-carrier-protein] synthase.